Reading from the N-terminus, the 295-residue chain is uncharacterized protein (295 aa).

The region spanning 4–233 (IVVKSMAMEK…LQNTIERLVL (230 aa)) is the Sigma-54 factor interaction domain.

This is an uncharacterized protein from Pseudomonas sp. (strain NS671).